We begin with the raw amino-acid sequence, 772 residues long: Rho guanine nucleotide exchange factor 6 (772 aa).

The region spanning 1–111 (MNPEERVVTW…TLLAVNKATE (111 aa)) is the Calponin-homology (CH) domain. The interval 115-158 (SERPCGRSSSLSATTSSQTNPQAAVPSTTPEQQSEEKAAEMTEN) is disordered. Positions 122-133 (SSSLSATTSSQT) are enriched in low complexity. Ser126 bears the Phosphoserine mark. Phosphothreonine is present on Thr133. Over residues 134-146 (NPQAAVPSTTPEQ) the composition is skewed to polar residues. The SH3 domain maps to 160-219 (SHQLIVKARFNFKQTNEDELSVCKGDIIYVTRVEEGGWWEGTLNGRTGWFPSNYVREIKP). The residue at position 225 (Ser225) is a Phosphoserine. The region spanning 241 to 421 (YYTVVLQNIL…KSLMGQCQDL (181 aa)) is the DH domain. In terms of domain architecture, PH spans 443–548 (DIKTLGNVIF…WMEQLNRLTK (106 aa)). A Phosphoserine modification is found at Ser488. Positions 557–573 (SKTSSSSCSTHSSFSST) are enriched in low complexity. Positions 557–581 (SKTSSSSCSTHSSFSSTGQPRGPLE) are disordered. Phosphoserine occurs at positions 640 and 680.

Interacts with PAK kinases through the SH3 domain. Interacts with GIT1. Interacts with PARVB. Component of cytoplasmic complexes, which also contain PXN, GIT1 and PAK1. Interacts with BIN2. Identified in a complex with BIN2 and GIT2. Interacts with PARVG; the guanine nucleotide exchange factor activity of ARHGEF6 is essential for PARVG-induced enhancement of cell spreading.

It is found in the cell projection. The protein resides in the lamellipodium. Functionally, acts as a RAC1 guanine nucleotide exchange factor (GEF). The protein is Rho guanine nucleotide exchange factor 6 (Arhgef6) of Rattus norvegicus (Rat).